Consider the following 269-residue polypeptide: Probable molybdenum ABC transporter permease protein HVO_B0370 (269 aa).

A run of 6 helical transmembrane segments spans residues 26 to 46 (LLLA…LVFA), 69 to 89 (VVAA…LAYW), 100 to 120 (VILA…GMLL), 140 to 160 (SLFG…VVTA), 198 to 218 (ILAG…ATLM), and 243 to 263 (FPVA…VHAL). Positions 65–258 (ATNSVVAATL…LVGIAVGAIL (194 aa)) constitute an ABC transmembrane type-1 domain.

This sequence belongs to the binding-protein-dependent transport system permease family. The complex is composed of two ATP-binding proteins, two transmembrane proteins (HVO_B0370) and a solute-binding protein (HVO_B0369).

The protein resides in the cell membrane. Its function is as follows. Part of an ABC transporter complex involved in molybdenum import. Responsible for the translocation of the substrate across the membrane. This is Probable molybdenum ABC transporter permease protein HVO_B0370 from Haloferax volcanii (strain ATCC 29605 / DSM 3757 / JCM 8879 / NBRC 14742 / NCIMB 2012 / VKM B-1768 / DS2) (Halobacterium volcanii).